A 191-amino-acid polypeptide reads, in one-letter code: MNLGDPDFVDVSKVISDMLSTNFAQGLKKKINDNKTFDPNYYGGRWDQINDHGTSHLSIIDSERNVVSLTSTINSYFGALMLSPSTGIVLNNEMDDFSIPMKSSSNLTVPPPAPANFIRPGKRPLSSMTPTIVLKDGKVKASVGASGGLYIIAGTTEVFLNYFFLKMDPLSSVLAPRIYHQLIPNIVSYEN.

T54 serves as the catalytic Nucleophile. Residues T72, N74, E93, D96, 126–127 (SS), and 147–148 (GG) contribute to the L-glutamate site.

Belongs to the gamma-glutamyltransferase family. In terms of tissue distribution, expressed at low levels in embryo, roots and leaves. In mature plants, expression is restricted to vascular tissues of roots, leaves, flowers and siliques.

The protein is Putative inactive glutathione hydrolase 4 (GGT4) of Arabidopsis thaliana (Mouse-ear cress).